The chain runs to 657 residues: UvrABC system protein B (657 aa).

One can recognise a Helicase ATP-binding domain in the interval 24–409 (AGVRNQVKSQ…SGHIVQQIIR (386 aa)). 37–44 (GTTGSGKT) contacts ATP. The Beta-hairpin signature appears at 90–113 (YYDYYQPEAYIARSDTYIEKSLLI). Residues 426–589 (QVDDLLEEIR…IVPKPIIKAI (164 aa)) enclose the Helicase C-terminal domain. A UVR domain is found at 617 to 652 (EEQIKKYEALMQRAAKEFRFNEAAKYRDAMQACKEQ).

Belongs to the UvrB family. As to quaternary structure, forms a heterotetramer with UvrA during the search for lesions. Interacts with UvrC in an incision complex.

The protein resides in the cytoplasm. Its function is as follows. The UvrABC repair system catalyzes the recognition and processing of DNA lesions. A damage recognition complex composed of 2 UvrA and 2 UvrB subunits scans DNA for abnormalities. Upon binding of the UvrA(2)B(2) complex to a putative damaged site, the DNA wraps around one UvrB monomer. DNA wrap is dependent on ATP binding by UvrB and probably causes local melting of the DNA helix, facilitating insertion of UvrB beta-hairpin between the DNA strands. Then UvrB probes one DNA strand for the presence of a lesion. If a lesion is found the UvrA subunits dissociate and the UvrB-DNA preincision complex is formed. This complex is subsequently bound by UvrC and the second UvrB is released. If no lesion is found, the DNA wraps around the other UvrB subunit that will check the other stand for damage. This Chlamydia pneumoniae (Chlamydophila pneumoniae) protein is UvrABC system protein B.